A 504-amino-acid polypeptide reads, in one-letter code: Catalase (504 aa).

Catalysis depends on residues histidine 56 and asparagine 129. A heme-binding site is contributed by tyrosine 339.

The protein belongs to the catalase family. In terms of assembly, homodimer. Requires heme as cofactor.

It catalyses the reaction 2 H2O2 = O2 + 2 H2O. Functionally, decomposes hydrogen peroxide into water and oxygen; serves to protect cells from the toxic effects of hydrogen peroxide. The chain is Catalase (katA) from Staphylococcus epidermidis.